Consider the following 186-residue polypeptide: Elongation factor P (186 aa).

Belongs to the elongation factor P family.

The protein resides in the cytoplasm. Its pathway is protein biosynthesis; polypeptide chain elongation. Functionally, involved in peptide bond synthesis. Stimulates efficient translation and peptide-bond synthesis on native or reconstituted 70S ribosomes in vitro. Probably functions indirectly by altering the affinity of the ribosome for aminoacyl-tRNA, thus increasing their reactivity as acceptors for peptidyl transferase. This Shewanella halifaxensis (strain HAW-EB4) protein is Elongation factor P.